The sequence spans 119 residues: Gas vesicle protein O1 (119 aa).

The span at 1 to 12 (MADPANDRSERE) shows a compositional bias: basic and acidic residues. The segment at 1 to 48 (MADPANDRSEREEGGEDDETPPASDGNPSPSANSFTLSNAQTRAREAA) is disordered. Polar residues predominate over residues 26 to 42 (GNPSPSANSFTLSNAQT).

Belongs to the gas vesicle GvpO family. As to quaternary structure, forms homodimers, forms a GvpN1-GvpO1 heterodimer, interacts with GvpC1 (via the latter's C-terminus), GvpF1, GvpI1 and GvpL1, might interact with GvpA1.

The protein resides in the gas vesicle. Its subcellular location is the cytoplasm. A minor component of the gas vesicle, also found in soluble extracts. May play a role in transcription and/or RNA stability and in GV assembly. Gas vesicles are hollow, gas filled proteinaceous nanostructures found in several microbial planktonic microorganisms. They allow positioning of halobacteria at the optimal depth for growth in the poorly aerated, shallow brine pools of their habitat. In terms of biological role, expression of a 9.5 kb p-vac DNA fragment containing 2 divergently transcribed regions (gvpD-gvpE-gvpF-gvpG-gvpH-gvpI-gvpJ-gvpK-gvpL-gvpM and gvpA-gvpC-gvpN-gvpO) allows H.volcanii to produce gas vesicles. A minimal gas vesicle can be made in H.volcanii by gvpA1-gvpO1 gvpF1-gvpG1-gvpJ1-gvpK1-gvpL1-gvpM1; lack of enough GvpJ1 prevents formation. The same region restores gas vesicle production in H.halobium without the p-vac locus, but it still has the c-vac locus. The sequence is that of Gas vesicle protein O1 from Halobacterium salinarum (strain ATCC 700922 / JCM 11081 / NRC-1) (Halobacterium halobium).